The sequence spans 1250 residues: TBC1 domain family member 9B (1250 aa).

2 consecutive GRAM domains span residues 142–209 (LKMR…EKNA) and 288–356 (ECYR…EKAD). Phosphothreonine is present on Thr397. The tract at residues 397–443 (TPSKQPGSIGSRKASVVDPSTESSPAPQEGSEQPASPASPLSSRQSF) is disordered. Phosphoserine is present on residues Ser411, Ser432, Ser435, and Ser463. Over residues 414–443 (DPSTESSPAPQEGSEQPASPASPLSSRQSF) the composition is skewed to polar residues. The Rab-GAP TBC domain maps to 508–695 (GIPESLRGEL…VIVDCFFYEG (188 aa)). The helical transmembrane segment at 668-688 (LSWFLTLFLSVMPFESAVVIV) threads the bilayer. The EF-hand domain occupies 879 to 914 (HTPLLAGRMFRLLDENKDSLINFKEFVTGMSGMYHG). Disordered stretches follow at residues 974-999 (LPQE…PDYR), 1069-1093 (SART…ELHQ), and 1128-1157 (VEGG…MSSY). Basic and acidic residues predominate over residues 984–999 (SEERGEEKGTSSPDYR). Phosphoserine is present on Ser1241.

It localises to the membrane. Functionally, may act as a GTPase-activating protein for Rab family protein(s). The protein is TBC1 domain family member 9B (TBC1D9B) of Homo sapiens (Human).